Consider the following 467-residue polypeptide: Cysteine--tRNA ligase (467 aa).

Residue cysteine 30 coordinates Zn(2+). Residues 32–42 (PTVYDDSHLGH) carry the 'HIGH' region motif. Residues cysteine 209, histidine 239, and glutamate 243 each contribute to the Zn(2+) site. The 'KMSKS' region motif lies at 271–275 (KMSKS). Lysine 274 serves as a coordination point for ATP.

This sequence belongs to the class-I aminoacyl-tRNA synthetase family. Monomer. Zn(2+) serves as cofactor.

It is found in the cytoplasm. The catalysed reaction is tRNA(Cys) + L-cysteine + ATP = L-cysteinyl-tRNA(Cys) + AMP + diphosphate. The polypeptide is Cysteine--tRNA ligase (Aliarcobacter butzleri (strain RM4018) (Arcobacter butzleri)).